Here is a 60-residue protein sequence, read N- to C-terminus: Large ribosomal subunit protein uL30 (60 aa).

It belongs to the universal ribosomal protein uL30 family. In terms of assembly, part of the 50S ribosomal subunit.

The protein is Large ribosomal subunit protein uL30 of Flavobacterium psychrophilum (strain ATCC 49511 / DSM 21280 / CIP 103535 / JIP02/86).